A 142-amino-acid chain; its full sequence is Small ribosomal subunit protein uS12 (142 aa).

Belongs to the universal ribosomal protein uS12 family. As to quaternary structure, part of the 30S ribosomal subunit.

With S4 and S5 plays an important role in translational accuracy. Located at the interface of the 30S and 50S subunits. The sequence is that of Small ribosomal subunit protein uS12 from Methanosarcina barkeri (strain Fusaro / DSM 804).